The sequence spans 395 residues: Elongation factor Tu (395 aa).

Residues 10-204 enclose the tr-type G domain; sequence KPHVNIGTIG…AVDSYIPTPE (195 aa). A G1 region spans residues 19 to 26; sequence GHVDHGKT. A GTP-binding site is contributed by 19–26; the sequence is GHVDHGKT. A Mg(2+)-binding site is contributed by threonine 26. Residues 60 to 64 are G2; it reads GITIS. Positions 81–84 are G3; sequence DCPG. GTP contacts are provided by residues 81–85 and 136–139; these read DCPGH and NKCD. Positions 136-139 are G4; it reads NKCD. The segment at 174–176 is G5; that stretch reads SAL.

It belongs to the TRAFAC class translation factor GTPase superfamily. Classic translation factor GTPase family. EF-Tu/EF-1A subfamily. Monomer.

The protein resides in the cytoplasm. It catalyses the reaction GTP + H2O = GDP + phosphate + H(+). Functionally, GTP hydrolase that promotes the GTP-dependent binding of aminoacyl-tRNA to the A-site of ribosomes during protein biosynthesis. The sequence is that of Elongation factor Tu from Listeria monocytogenes serotype 4b (strain CLIP80459).